A 466-amino-acid chain; its full sequence is Ribulose bisphosphate carboxylase large chain (466 aa).

Lys5 carries the N6,N6,N6-trimethyllysine modification. Substrate is bound by residues Asn114 and Thr164. Lys166 (proton acceptor) is an active-site residue. Lys168 provides a ligand contact to substrate. The Mg(2+) site is built by Lys192, Asp194, and Glu195. Lys192 is subject to N6-carboxylysine. His285 functions as the Proton acceptor in the catalytic mechanism. Residues Arg286, His318, and Ser370 each contribute to the substrate site.

The protein belongs to the RuBisCO large chain family. Type I subfamily. Heterohexadecamer of 8 large chains and 8 small chains; disulfide-linked. The disulfide link is formed within the large subunit homodimers. Mg(2+) is required as a cofactor. In terms of processing, the disulfide bond which can form in the large chain dimeric partners within the hexadecamer appears to be associated with oxidative stress and protein turnover.

Its subcellular location is the plastid. The protein localises to the chloroplast. It carries out the reaction 2 (2R)-3-phosphoglycerate + 2 H(+) = D-ribulose 1,5-bisphosphate + CO2 + H2O. The enzyme catalyses D-ribulose 1,5-bisphosphate + O2 = 2-phosphoglycolate + (2R)-3-phosphoglycerate + 2 H(+). In terms of biological role, ruBisCO catalyzes two reactions: the carboxylation of D-ribulose 1,5-bisphosphate, the primary event in carbon dioxide fixation, as well as the oxidative fragmentation of the pentose substrate in the photorespiration process. Both reactions occur simultaneously and in competition at the same active site. This Averrhoa carambola (Star fruit) protein is Ribulose bisphosphate carboxylase large chain.